The sequence spans 359 residues: Phospho-N-acetylmuramoyl-pentapeptide-transferase (359 aa).

10 helical membrane-spanning segments follow: residues Val-23–Ala-43, Met-68–Phe-88, Val-92–Met-112, Met-126–Gly-146, Ala-165–Ala-185, Gly-198–Ala-218, Ser-235–Tyr-255, Val-262–Val-282, Ile-287–Val-307, and Lys-336–Leu-356.

It belongs to the glycosyltransferase 4 family. MraY subfamily. Mg(2+) is required as a cofactor.

The protein localises to the cell inner membrane. It catalyses the reaction UDP-N-acetyl-alpha-D-muramoyl-L-alanyl-gamma-D-glutamyl-meso-2,6-diaminopimeloyl-D-alanyl-D-alanine + di-trans,octa-cis-undecaprenyl phosphate = di-trans,octa-cis-undecaprenyl diphospho-N-acetyl-alpha-D-muramoyl-L-alanyl-D-glutamyl-meso-2,6-diaminopimeloyl-D-alanyl-D-alanine + UMP. Its pathway is cell wall biogenesis; peptidoglycan biosynthesis. Catalyzes the initial step of the lipid cycle reactions in the biosynthesis of the cell wall peptidoglycan: transfers peptidoglycan precursor phospho-MurNAc-pentapeptide from UDP-MurNAc-pentapeptide onto the lipid carrier undecaprenyl phosphate, yielding undecaprenyl-pyrophosphoryl-MurNAc-pentapeptide, known as lipid I. This Helicobacter hepaticus (strain ATCC 51449 / 3B1) protein is Phospho-N-acetylmuramoyl-pentapeptide-transferase.